We begin with the raw amino-acid sequence, 479 residues long: Glycogen synthase (479 aa).

Lysine 15 serves as a coordination point for ADP-alpha-D-glucose.

Belongs to the glycosyltransferase 1 family. Bacterial/plant glycogen synthase subfamily.

It catalyses the reaction [(1-&gt;4)-alpha-D-glucosyl](n) + ADP-alpha-D-glucose = [(1-&gt;4)-alpha-D-glucosyl](n+1) + ADP + H(+). Its pathway is glycan biosynthesis; glycogen biosynthesis. Synthesizes alpha-1,4-glucan chains using ADP-glucose. In Roseobacter denitrificans (strain ATCC 33942 / OCh 114) (Erythrobacter sp. (strain OCh 114)), this protein is Glycogen synthase.